An 848-amino-acid chain; its full sequence is DNA mismatch repair protein MutS (848 aa).

605–612 (GPNMAGKS) lines the ATP pocket.

It belongs to the DNA mismatch repair MutS family.

Functionally, this protein is involved in the repair of mismatches in DNA. It is possible that it carries out the mismatch recognition step. This protein has a weak ATPase activity. The chain is DNA mismatch repair protein MutS from Leptospira interrogans serogroup Icterohaemorrhagiae serovar Lai (strain 56601).